A 405-amino-acid chain; its full sequence is Elongation factor Tu (405 aa).

Residues 10–215 (KPHVNIGTIG…AVDSYIPTPE (206 aa)) form the tr-type G domain. The tract at residues 19–26 (GHVDHGKT) is G1. 19–26 (GHVDHGKT) is a GTP binding site. Threonine 26 is a Mg(2+) binding site. Residues 61–65 (GITIN) are G2. The tract at residues 82–85 (DCPG) is G3. GTP is bound by residues 82–86 (DCPGH) and 137–140 (NKVD). Residues 137–140 (NKVD) are G4. The segment at 175–177 (SAL) is G5.

This sequence belongs to the TRAFAC class translation factor GTPase superfamily. Classic translation factor GTPase family. EF-Tu/EF-1A subfamily. Monomer.

It localises to the cytoplasm. It catalyses the reaction GTP + H2O = GDP + phosphate + H(+). Its function is as follows. GTP hydrolase that promotes the GTP-dependent binding of aminoacyl-tRNA to the A-site of ribosomes during protein biosynthesis. In Deinococcus radiodurans (strain ATCC 13939 / DSM 20539 / JCM 16871 / CCUG 27074 / LMG 4051 / NBRC 15346 / NCIMB 9279 / VKM B-1422 / R1), this protein is Elongation factor Tu.